Here is a 173-residue protein sequence, read N- to C-terminus: Shikimate kinase 1 (173 aa).

14–19 (GAGKST) is an ATP binding site. S18 serves as a coordination point for Mg(2+). Residues D36, R60, and G82 each coordinate substrate. Residue R120 participates in ATP binding. Position 140 (R140) interacts with substrate. Residue Q157 coordinates ATP.

It belongs to the shikimate kinase family. As to quaternary structure, monomer. It depends on Mg(2+) as a cofactor.

It localises to the cytoplasm. It carries out the reaction shikimate + ATP = 3-phosphoshikimate + ADP + H(+). The protein operates within metabolic intermediate biosynthesis; chorismate biosynthesis; chorismate from D-erythrose 4-phosphate and phosphoenolpyruvate: step 5/7. Functionally, catalyzes the specific phosphorylation of the 3-hydroxyl group of shikimic acid using ATP as a cosubstrate. The polypeptide is Shikimate kinase 1 (Enterobacter sp. (strain 638)).